A 423-amino-acid chain; its full sequence is F-box/LRR-repeat protein 2 (423 aa).

One can recognise an F-box domain in the interval 9 to 55; that stretch reads GLINKKLPKELLLRIFSFLDIVTLCRCAQISKAWNILALDGSNWQRI. LRR repeat units lie at residues 61–87, 88–113, 114–139, 140–165, 166–191, 192–217, 218–243, 244–269, 270–295, 296–321, 322–350, 351–375, and 376–401; these read QTDV…SLRG, CIGV…NLNG, CTKI…DLTS, CVSI…NLSW, CDQI…LLRG, CTQL…NLQS, CSRI…CLSG, CSNL…EAAR, CSHL…DLEE, CILI…SLSH, CELI…ELDN, CLLI…ELYD, and CQQV…AYFA. The interaction with Calmodulin stretch occupies residues 80 to 90; that stretch reads LRKLSLRGCIG. A Glycyl lysine isopeptide (Lys-Gly) (interchain with G-Cter in ubiquitin) cross-link involves residue Lys201. Thr404 carries the post-translational modification Phosphothreonine. Cys420 is lipidated: S-geranylgeranyl cysteine. The CAAX motif signature appears at 420–423; that stretch reads CVIL.

Part of the SCF (SKP1-CUL1-F-box) E3 ubiquitin-protein ligase complex SCF(FBXL2) composed of CUL1, SKP1, RBX1 and FBXL2. Interacts with calmodulin; may antagonize substrate ubiquitination by SCF(FBXL2). May interact with PIK3R1. Interacts with PTPN13. In terms of assembly, (Microbial infection) Interacts with hepatitis C virus non-structural protein 5A (NS5A) and less efficiently, with hepatitis C virus non-structural protein 5B (NS5B); a reaction crucial for hepatitis C virus RNA replication. Post-translationally, phosphorylated by GSK-beta (GSK3B), promoting recognition by FBXO3, leading to its ubiquitination by the SCF(FBXO3) complex. Ubiquitinated at Lys-201 by the SCF(FBXO3) complex in response to lipopolysaccharide (LPS), leading to its degradation by the proteasome. Expressed in brain, heart, kidney, liver, lung, pancreas and placenta.

It is found in the membrane. Its pathway is protein modification; protein ubiquitination. In terms of biological role, calcium-activated substrate recognition component of the SCF (SKP1-cullin-F-box protein) E3 ubiquitin-protein ligase complex, SCF(FBXL2), which mediates the ubiquitination and subsequent proteasomal degradation of target proteins. Unlike many F-box proteins, FBXL2 does not seem to target phosphodegron within its substrates but rather calmodulin-binding motifs and is thereby antagonized by calmodulin. This is the case for the cyclins CCND2 and CCND3 which polyubiquitination and subsequent degradation are inhibited by calmodulin. Through CCND2 and CCND3 degradation induces cell-cycle arrest in G(0). SCF(FBXL2) also mediates PIK3R2 ubiquitination and proteasomal degradation thereby regulating phosphatidylinositol 3-kinase signaling and autophagy. PCYT1A monoubiquitination by SCF(FBXL2) and subsequent degradation regulates synthesis of phosphatidylcholine, which is utilized for formation of membranes and of pulmonary surfactant. The SCF(FBXL2) complex acts as a regulator of inflammation by mediating ubiquitination and degradation of TRAF proteins (TRAF1, TRAF2, TRAF3, TRAF4, TRAF5 and TRAF6). The SCF(FBXL2) complex acts as a negative regulator of the NLRP3 inflammasome by mediating ubiquitination and degradation of NLRP3. In Homo sapiens (Human), this protein is F-box/LRR-repeat protein 2.